Reading from the N-terminus, the 322-residue chain is ATP-dependent 6-phosphofructokinase (322 aa).

Residue Gly-11 participates in ATP binding. Residue 21–25 coordinates ADP; it reads RAVVR. ATP-binding positions include 72 to 73 and 102 to 105; these read RC and GDGS. Asp-103 contributes to the Mg(2+) binding site. Substrate is bound at residue 127-129; the sequence is TID. The Proton acceptor role is filled by Asp-129. Position 156 (Arg-156) interacts with ADP. Substrate is bound by residues Arg-164 and 171-173; that span reads MGR. ADP-binding positions include 187–189, Arg-213, and 215–217; these read GAE and KKH. Residues Glu-224, Arg-245, and 251-254 each bind substrate; that span reads HIQR.

The protein belongs to the phosphofructokinase type A (PFKA) family. ATP-dependent PFK group I subfamily. Prokaryotic clade 'B1' sub-subfamily. As to quaternary structure, homotetramer. The cofactor is Mg(2+).

It localises to the cytoplasm. It carries out the reaction beta-D-fructose 6-phosphate + ATP = beta-D-fructose 1,6-bisphosphate + ADP + H(+). The protein operates within carbohydrate degradation; glycolysis; D-glyceraldehyde 3-phosphate and glycerone phosphate from D-glucose: step 3/4. Allosterically activated by ADP and other diphosphonucleosides, and allosterically inhibited by phosphoenolpyruvate. Functionally, catalyzes the phosphorylation of D-fructose 6-phosphate to fructose 1,6-bisphosphate by ATP, the first committing step of glycolysis. The chain is ATP-dependent 6-phosphofructokinase from Staphylococcus carnosus (strain TM300).